Consider the following 364-residue polypeptide: Fructose-bisphosphate aldolase B (364 aa).

Ala2 is subject to N-acetylalanine. Lys13 is subject to N6-succinyllysine. Ser36 carries the post-translational modification Phosphoserine. Residue Thr39 is modified to Phosphothreonine. Arg43 contributes to the beta-D-fructose 1,6-bisphosphate binding site. Phosphoserine is present on Ser89. Thr119 carries the post-translational modification Phosphothreonine. The residue at position 121 (Lys121) is an N6-succinyllysine. Phosphoserine is present on Ser132. Glu188 serves as the catalytic Proton acceptor. The active-site Schiff-base intermediate with dihydroxyacetone-P is the Lys230. Residues Ser272, Ser276, Ser299, and Ser301 each carry the phosphoserine modification. Residue 272–274 (SGG) coordinates beta-D-fructose 1,6-bisphosphate. Position 304 (Arg304) interacts with beta-D-fructose 1,6-bisphosphate. A Phosphoserine modification is found at Ser309. N6-succinyllysine is present on Lys317.

The protein belongs to the class I fructose-bisphosphate aldolase family. In terms of assembly, homotetramer. Interacts with BBS1, BBS2, BBS4 and BBS7. Forms a ternary complex with G6PD and TP53; this interaction is direct.

Its subcellular location is the cytoplasm. The protein localises to the cytosol. It localises to the cytoskeleton. The protein resides in the microtubule organizing center. It is found in the centrosome. Its subcellular location is the centriolar satellite. The catalysed reaction is beta-D-fructose 1,6-bisphosphate = D-glyceraldehyde 3-phosphate + dihydroxyacetone phosphate. The enzyme catalyses beta-D-fructose 1-phosphate = D-glyceraldehyde + dihydroxyacetone phosphate. It participates in carbohydrate degradation; glycolysis; D-glyceraldehyde 3-phosphate and glycerone phosphate from D-glucose: step 4/4. It functions in the pathway carbohydrate biosynthesis; gluconeogenesis. The protein operates within carbohydrate metabolism; fructose metabolism. Catalyzes the aldol cleavage of fructose 1,6-biphosphate to form two triosephosphates dihydroxyacetone phosphate and D-glyceraldehyde 3-phosphate in glycolysis as well as the reverse stereospecific aldol addition reaction in gluconeogenesis. In fructolysis, metabolizes fructose 1-phosphate derived from the phosphorylation of dietary fructose by fructokinase into dihydroxyacetone phosphate and D-glyceraldehyde. Acts as an adapter independently of its enzymatic activity, exerts a tumor suppressor role by stabilizing the ternary complex with G6PD and TP53 to inhibit G6PD activity and keep oxidative pentose phosphate metabolism in check. The sequence is that of Fructose-bisphosphate aldolase B (Aldob) from Rattus norvegicus (Rat).